Consider the following 369-residue polypeptide: Anhydro-N-acetylmuramic acid kinase (369 aa).

12–19 (GTSMDGVD) provides a ligand contact to ATP.

It belongs to the anhydro-N-acetylmuramic acid kinase family.

The enzyme catalyses 1,6-anhydro-N-acetyl-beta-muramate + ATP + H2O = N-acetyl-D-muramate 6-phosphate + ADP + H(+). The protein operates within amino-sugar metabolism; 1,6-anhydro-N-acetylmuramate degradation. Its pathway is cell wall biogenesis; peptidoglycan recycling. Its function is as follows. Catalyzes the specific phosphorylation of 1,6-anhydro-N-acetylmuramic acid (anhMurNAc) with the simultaneous cleavage of the 1,6-anhydro ring, generating MurNAc-6-P. Is required for the utilization of anhMurNAc either imported from the medium or derived from its own cell wall murein, and thus plays a role in cell wall recycling. The sequence is that of Anhydro-N-acetylmuramic acid kinase from Shewanella amazonensis (strain ATCC BAA-1098 / SB2B).